The following is a 92-amino-acid chain: Small ribosomal subunit protein uS19 (92 aa).

Belongs to the universal ribosomal protein uS19 family.

Protein S19 forms a complex with S13 that binds strongly to the 16S ribosomal RNA. In Rhodopseudomonas palustris (strain BisB18), this protein is Small ribosomal subunit protein uS19.